The following is a 238-amino-acid chain: Ribitol-5-phosphate cytidylyltransferase (238 aa).

CTP contacts are provided by residues Leu-7–Gly-10 and Gly-81–Thr-87.

Belongs to the IspD/TarI cytidylyltransferase family. TarI subfamily.

The enzyme catalyses D-ribitol 5-phosphate + CTP + H(+) = CDP-L-ribitol + diphosphate. The protein operates within cell wall biogenesis; poly(ribitol phosphate) teichoic acid biosynthesis. In terms of biological role, catalyzes the transfer of the cytidylyl group of CTP to D-ribitol 5-phosphate. The sequence is that of Ribitol-5-phosphate cytidylyltransferase from Staphylococcus epidermidis (strain ATCC 35984 / DSM 28319 / BCRC 17069 / CCUG 31568 / BM 3577 / RP62A).